The sequence spans 311 residues: Maspardin (311 aa).

Positions 86 to 159 (EFCDGFRKLL…NSFWLMPSFM (74 aa)) constitute an AB hydrolase-1 domain.

It belongs to the AB hydrolase superfamily.

The protein localises to the cytoplasm. The sequence is that of Maspardin (spg21) from Danio rerio (Zebrafish).